The primary structure comprises 809 residues: Ribosome biogenesis protein ERB1 (809 aa).

Residues 1–107 (MSKSSKVGMT…SDTRSITDAI (107 aa)) are disordered. Acidic residues-rich tracts occupy residues 30–70 (AEVD…EDSD) and 77–97 (LGEE…EPQE). The required for interaction with NOP7 stretch occupies residues 267–383 (RFVPSKHEAK…LRKVPGYQES (117 aa)). Residues 383–419 (SVRERFERCLDLYLAPRVRHNKLNIDPESLIPELPSP) are required for interaction with YTM1. WD repeat units follow at residues 435–474 (GHTD…QVFN) and 483–523 (NDED…FDIE). The interval 545-569 (EEKFKNDEGNEDEDDEDDSATSTAV) is disordered. The segment covering 553–563 (GNEDEDDEDDS) has biased composition (acidic residues). WD repeat units lie at residues 593–635 (QCRK…SQSP), 638–676 (KSKG…LVKK), 679–718 (PGVR…TPYK), 722–762 (YHEK…DLMT), and 778–809 (VNSI…LWTT).

The protein belongs to the WD repeat BOP1/ERB1 family. As to quaternary structure, component of the NOP7 complex, composed of ERB1, NOP7 and YTM1. The complex is held together by ERB1, which interacts with NOP7 via its N-terminal domain and with YTM1 via a high-affinity interaction between the seven-bladed beta-propeller domains of the 2 proteins. The NOP7 complex associates with the 66S pre-ribosome.

The protein localises to the nucleus. The protein resides in the nucleolus. It localises to the nucleoplasm. Its function is as follows. Component of the NOP7 complex, which is required for maturation of the 25S and 5.8S ribosomal RNAs and formation of the 60S ribosome. This chain is Ribosome biogenesis protein ERB1, found in Scheffersomyces stipitis (strain ATCC 58785 / CBS 6054 / NBRC 10063 / NRRL Y-11545) (Yeast).